The chain runs to 1153 residues: uncharacterized protein (1153 aa).

Disordered regions lie at residues 164 to 193, 224 to 245, 294 to 316, 332 to 427, 613 to 648, 683 to 703, 717 to 740, 772 to 819, 838 to 874, and 942 to 1106; these read TTIKQLPPPLPQPQPQPHQQQPHNKKQIDD, DNYDDIDNNNNNNNNSNNDDDK, KSPQKLKLQQQQQQQQQQKQSKH, EHKL…KNKK, LSMLDSTNDGSSQEYEEEEEEEKNQKNFEKEEEGEN, QQQQQEKEKQQQEKQQDEEMS, KSDDNNNNNDNNNNNNNNQTSKRK, NKKL…KTIE, ASSGGSNNNNNNDQNDSITTKEKERSETIKTHNEDEK, and NNNN…NNEV. Over residues 169-179 the composition is skewed to pro residues; it reads LPPPLPQPQPQ. 4 stretches are compositionally biased toward low complexity: residues 231–240, 298–312, 336–391, and 399–423; these read NNNNNNNNSN, KLKLQQQQQQQQQQK, QQQQ…TPKK, and NNVNNNNNNNNNNNNNNNNNNNNNN. Positions 613 to 625 are enriched in polar residues; that stretch reads LSMLDSTNDGSSQ. The segment covering 687–699 has biased composition (basic and acidic residues); sequence QEKEKQQQEKQQD. Over residues 721–734 the composition is skewed to low complexity; that stretch reads NNNNNDNNNNNNNN. Basic and acidic residues predominate over residues 772 to 784; it reads NKKLRVDSEDQQT. Low complexity-rich tracts occupy residues 788–808 and 839–854; these read TTTTTTTTTTTNTNNNNNNNN and SSGGSNNNNNNDQNDS. Over residues 856–874 the composition is skewed to basic and acidic residues; that stretch reads TTKEKERSETIKTHNEDEK. Over residues 942 to 987 the composition is skewed to low complexity; it reads NNNNNNNNNINNINNIGNKNTTVNNSNHSNHSNNNINNNNIFKNSN. Polar residues-rich tracts occupy residues 988 to 998 and 1005 to 1015; these read PIVDTNFSSTT and QSKIFTGNQLP. The span at 1019–1059 shows a compositional bias: low complexity; the sequence is INNENVVNNNNNNEINNTTTTTTNNNSGIHKNNNNYNSDNS. The span at 1064–1081 shows a compositional bias: basic and acidic residues; the sequence is DGLKQEKEEQKEEQKENK. The segment covering 1082-1105 has biased composition (low complexity); it reads NNNNNNNNNNNNNNNNNNNNNNNE.

This is an uncharacterized protein from Dictyostelium discoideum (Social amoeba).